The sequence spans 186 residues: Ribosome-recycling factor (186 aa).

The interval 144–163 (EKDGVIGQDESRAQSERVQK) is disordered.

The protein belongs to the RRF family.

It is found in the cytoplasm. In terms of biological role, responsible for the release of ribosomes from messenger RNA at the termination of protein biosynthesis. May increase the efficiency of translation by recycling ribosomes from one round of translation to another. The polypeptide is Ribosome-recycling factor (Rhizobium johnstonii (strain DSM 114642 / LMG 32736 / 3841) (Rhizobium leguminosarum bv. viciae)).